A 351-amino-acid chain; its full sequence is Phosphoribosylformylglycinamidine cyclo-ligase (351 aa).

The protein belongs to the AIR synthase family.

The protein resides in the cytoplasm. It catalyses the reaction 2-formamido-N(1)-(5-O-phospho-beta-D-ribosyl)acetamidine + ATP = 5-amino-1-(5-phospho-beta-D-ribosyl)imidazole + ADP + phosphate + H(+). It participates in purine metabolism; IMP biosynthesis via de novo pathway; 5-amino-1-(5-phospho-D-ribosyl)imidazole from N(2)-formyl-N(1)-(5-phospho-D-ribosyl)glycinamide: step 2/2. The protein is Phosphoribosylformylglycinamidine cyclo-ligase of Burkholderia mallei (strain NCTC 10247).